A 340-amino-acid polypeptide reads, in one-letter code: Protein S-acyltransferase 10 (340 aa).

2 helical membrane passes run leucine 34–phenylalanine 54 and proline 66–threonine 86. The region spanning leucine 162–cysteine 212 is the DHHC domain. Catalysis depends on cysteine 192, which acts as the S-palmitoyl cysteine intermediate. The next 2 helical transmembrane spans lie at phenylalanine 207–aspartate 227 and isoleucine 241–isoleucine 261.

This sequence belongs to the DHHC palmitoyltransferase family. In terms of tissue distribution, expressed in mature embryos, embryo sacs, cotyledons, whole seedlings, hydathodes, guard cells, sites of lateral root initiation, root tips and phloem, but not in xylem.

Its subcellular location is the vacuole membrane. The catalysed reaction is L-cysteinyl-[protein] + hexadecanoyl-CoA = S-hexadecanoyl-L-cysteinyl-[protein] + CoA. In terms of biological role, S-acyltransferase involved in protein lipid modification. Catalyzes the palmitoylation of proteins peripheral or integral to the tonoplast. Required for the tonoplast localization of CBL2, CBL3 and CBL6, but not for the plasma membrane localization of CBL9, for the endosome localization of RABF1 or for the endomembrane localization of RABF2B. This is Protein S-acyltransferase 10 (PAT10) from Arabidopsis thaliana (Mouse-ear cress).